Consider the following 41-residue polypeptide: Histone H3.2 (41 aa).

Residues 1-41 (MARAKQTARKSTGAEAPRKQLASKAARKSAPATGGIKKPHR) are disordered.

The protein belongs to the histone H3 family. In terms of assembly, the nucleosome is a histone octamer containing two molecules each of H2A, H2B, H3 and H4 assembled in one H3-H4 heterotetramer and two H2A-H2B heterodimers. The octamer wraps approximately 147 bp of DNA.

It is found in the nucleus. The protein localises to the chromosome. Its function is as follows. Core component of nucleosome. Nucleosomes wrap and compact DNA into chromatin, limiting DNA accessibility to the cellular machineries which require DNA as a template. Histones thereby play a central role in transcription regulation, DNA repair, DNA replication and chromosomal stability. DNA accessibility is regulated via a complex set of post-translational modifications of histones, also called histone code, and nucleosome remodeling. This chain is Histone H3.2, found in Tetrahymena borealis.